The following is a 38-amino-acid chain: Exendin-1 (38 aa).

Ser-32 carries O-linked (HexNAc...) serine; in Exendin-1 and Exendin-1b glycosylation.

It belongs to the glucagon family. O-linked glycan consists of Hex-HexNAc saccharide. Post-translationally, glycosylation may be of interest for the biological stability of exendin-1 and exendin-1b. In terms of tissue distribution, expressed by the venom gland.

It is found in the secreted. O-linked and free exendin-1 and exendin-1b have vasoactive intestinal peptide(VIP)/secretin-like biological activities. They interact with rat and human VIP receptors 1 (VIPR1) and 2 (VIPR2), with the highest affinity for the human VIPR2. They induce hypotension that is mediated by relaxation of cardiac smooth muscle. The chain is Exendin-1 from Heloderma horridum horridum (Mexican beaded lizard).